Consider the following 160-residue polypeptide: Putative 4-hydroxy-4-methyl-2-oxoglutarate aldolase (160 aa).

Residues 75-78 (GDLI) and R97 contribute to the substrate site. An a divalent metal cation-binding site is contributed by D98.

This sequence belongs to the class II aldolase/RraA-like family. As to quaternary structure, homotrimer. It depends on a divalent metal cation as a cofactor.

The enzyme catalyses 4-hydroxy-4-methyl-2-oxoglutarate = 2 pyruvate. It catalyses the reaction oxaloacetate + H(+) = pyruvate + CO2. In terms of biological role, catalyzes the aldol cleavage of 4-hydroxy-4-methyl-2-oxoglutarate (HMG) into 2 molecules of pyruvate. Also contains a secondary oxaloacetate (OAA) decarboxylase activity due to the common pyruvate enolate transition state formed following C-C bond cleavage in the retro-aldol and decarboxylation reactions. This is Putative 4-hydroxy-4-methyl-2-oxoglutarate aldolase from Rhodospirillum centenum (strain ATCC 51521 / SW).